A 129-amino-acid chain; its full sequence is Protein Turandot B1 (129 aa).

The first 21 residues, 1 to 21 (MNSATSLMCFALLLISPLCMG), serve as a signal peptide directing secretion.

The protein belongs to the Turandot family.

Its subcellular location is the secreted. Its function is as follows. A humoral factor that may play a role in stress tolerance. The protein is Protein Turandot B1 (TotB1) of Drosophila erecta (Fruit fly).